A 270-amino-acid chain; its full sequence is Protein-ADP-ribose hydrolase (270 aa).

The region spanning 73–267 (VSVKDCQKTN…LYDTYLQKEN (195 aa)) is the Macro domain. Residues aspartate 92, isoleucine 93, and asparagine 106 each coordinate ADP-D-ribose. Residues cysteine 112, histidine 117, and cysteine 119 each coordinate Zn(2+). ADP-D-ribose is bound by residues cysteine 119, isoleucine 120, aspartate 121, serine 212, threonine 213, glycine 214, glutamate 215, and phenylalanine 216.

It belongs to the MacroD-type family. Zn-Macro subfamily. Zn(2+) is required as a cofactor.

It catalyses the reaction 4-O-(ADP-D-ribosyl)-L-aspartyl-[protein] + H2O = L-aspartyl-[protein] + ADP-D-ribose + H(+). Its function is as follows. ADP-ribosylhydrolase that specifically reverses the SirTM-mediated mono-ADP-ribosylation at an asparatate residue of GcvH-L, by releasing ADP-ribose from the target protein. May play a role in the regulation of the response to host-induced oxidative stress. This chain is Protein-ADP-ribose hydrolase, found in Streptococcus pyogenes serotype M6 (strain ATCC BAA-946 / MGAS10394).